The following is a 382-amino-acid chain: S-adenosylmethionine synthase (382 aa).

Position 16 (His-16) interacts with ATP. Asp-18 is a Mg(2+) binding site. Residue Glu-44 coordinates K(+). Residues Glu-57 and Gln-100 each coordinate L-methionine. The segment at 100 to 110 (QSPDIAQGVDN) is flexible loop. Residues 165–167 (DAK), 231–232 (RF), Asp-240, 246–247 (RK), and Lys-267 contribute to the ATP site. Position 240 (Asp-240) interacts with L-methionine. Lys-271 contributes to the L-methionine binding site.

The protein belongs to the AdoMet synthase family. As to quaternary structure, homotetramer; dimer of dimers. Requires Mg(2+) as cofactor. It depends on K(+) as a cofactor.

It localises to the cytoplasm. It catalyses the reaction L-methionine + ATP + H2O = S-adenosyl-L-methionine + phosphate + diphosphate. Its pathway is amino-acid biosynthesis; S-adenosyl-L-methionine biosynthesis; S-adenosyl-L-methionine from L-methionine: step 1/1. In terms of biological role, catalyzes the formation of S-adenosylmethionine (AdoMet) from methionine and ATP. The overall synthetic reaction is composed of two sequential steps, AdoMet formation and the subsequent tripolyphosphate hydrolysis which occurs prior to release of AdoMet from the enzyme. This Legionella pneumophila (strain Paris) protein is S-adenosylmethionine synthase.